A 456-amino-acid chain; its full sequence is ATP synthase subunit beta 1 (456 aa).

152–159 is an ATP binding site; it reads GGAGVGKS.

This sequence belongs to the ATPase alpha/beta chains family. As to quaternary structure, F-type ATPases have 2 components, CF(1) - the catalytic core - and CF(0) - the membrane proton channel. CF(1) has five subunits: alpha(3), beta(3), gamma(1), delta(1), epsilon(1). CF(0) has three main subunits: a(1), b(2) and c(9-12). The alpha and beta chains form an alternating ring which encloses part of the gamma chain. CF(1) is attached to CF(0) by a central stalk formed by the gamma and epsilon chains, while a peripheral stalk is formed by the delta and b chains.

The protein localises to the cell membrane. It catalyses the reaction ATP + H2O + 4 H(+)(in) = ADP + phosphate + 5 H(+)(out). Its function is as follows. Produces ATP from ADP in the presence of a proton gradient across the membrane. The catalytic sites are hosted primarily by the beta subunits. The chain is ATP synthase subunit beta 1 from Listeria innocua serovar 6a (strain ATCC BAA-680 / CLIP 11262).